A 421-amino-acid chain; its full sequence is UDP-N-acetylglucosamine 1-carboxyvinyltransferase 1 (421 aa).

22-23 (KN) provides a ligand contact to phosphoenolpyruvate. R95 provides a ligand contact to UDP-N-acetyl-alpha-D-glucosamine. The Proton donor role is filled by C119. A 2-(S-cysteinyl)pyruvic acid O-phosphothioketal modification is found at C119. Residues 124 to 128 (RPIEQ), D308, and V330 contribute to the UDP-N-acetyl-alpha-D-glucosamine site.

The protein belongs to the EPSP synthase family. MurA subfamily.

The protein resides in the cytoplasm. It carries out the reaction phosphoenolpyruvate + UDP-N-acetyl-alpha-D-glucosamine = UDP-N-acetyl-3-O-(1-carboxyvinyl)-alpha-D-glucosamine + phosphate. It participates in cell wall biogenesis; peptidoglycan biosynthesis. Cell wall formation. Adds enolpyruvyl to UDP-N-acetylglucosamine. This Staphylococcus epidermidis (strain ATCC 35984 / DSM 28319 / BCRC 17069 / CCUG 31568 / BM 3577 / RP62A) protein is UDP-N-acetylglucosamine 1-carboxyvinyltransferase 1.